We begin with the raw amino-acid sequence, 429 residues long: Integral membrane protein GPR137C (429 aa).

Residues 1 to 17 (MRVSVPGPAAAAAPAAG) show a composition bias toward low complexity. Positions 1–29 (MRVSVPGPAAAAAPAAGREPSTPGGGSGG) are disordered. Residues 1–48 (MRVSVPGPAAAAAPAAGREPSTPGGGSGGGGAVAAASGAAVPGSVQLA) are Lumenal-facing. A helical transmembrane segment spans residues 49–69 (LSVLHALLYAALFAFAYLQLW). At 70–83 (RLLLYRERRLSYQS) the chain is on the cytoplasmic side. The helical transmembrane segment at 84–104 (LCLFLCLLWAALRTTLFSAAF) threads the bilayer. The Lumenal portion of the chain corresponds to 105–120 (SLSGSLPLLRPPAHLH). The helical transmembrane segment at 121–141 (FFPHWLLYCFPSCLQFSTLCL) threads the bilayer. At 142 to 167 (LNLYLAEVICKVRCATELDRHKILLH) the chain is on the cytoplasmic side. The helical transmembrane segment at 168-188 (LGFIMASLLFLVVNLTCAMLV) threads the bilayer. Residues 189 to 205 (HGDVPENQLKWTVFVRA) are Lumenal-facing. Residues 206 to 226 (LINDSLFILCAISLVCYICKI) traverse the membrane as a helical segment. Topologically, residues 227–246 (TKMSSANVYLESKGMSLCQT) are cytoplasmic. Residues 247–267 (VVVGSVVILLYSSRACYNLVV) traverse the membrane as a helical segment. Over 268–300 (VTISQDTLESPFNYGWDNLSDKAHVEDISGEEY) the chain is Lumenal. Asn-285 carries N-linked (GlcNAc...) asparagine glycosylation. A helical membrane pass occupies residues 301–321 (IVFGMVLFLWEHVPAWSVVLF). At 322–429 (FRAQRLNQNL…HHSLYVTPQN (108 aa)) the chain is on the cytoplasmic side.

The protein belongs to the GPR137 family.

It is found in the lysosome membrane. Lysosomal integral membrane protein that may regulate MTORC1 complex translocation to lysosomes. The polypeptide is Integral membrane protein GPR137C (GPR137C) (Homo sapiens (Human)).